We begin with the raw amino-acid sequence, 273 residues long: NH(3)-dependent NAD(+) synthetase (273 aa).

Position 46 to 53 (46 to 53 (GISGGQDS)) interacts with ATP. Aspartate 52 provides a ligand contact to Mg(2+). Arginine 139 is a binding site for deamido-NAD(+). Threonine 159 lines the ATP pocket. Glutamate 164 contacts Mg(2+). Deamido-NAD(+)-binding residues include lysine 172 and aspartate 179. ATP-binding residues include lysine 188 and threonine 210. 259 to 260 (HK) contributes to the deamido-NAD(+) binding site.

It belongs to the NAD synthetase family. Homodimer.

The enzyme catalyses deamido-NAD(+) + NH4(+) + ATP = AMP + diphosphate + NAD(+) + H(+). Its pathway is cofactor biosynthesis; NAD(+) biosynthesis; NAD(+) from deamido-NAD(+) (ammonia route): step 1/1. Functionally, catalyzes the ATP-dependent amidation of deamido-NAD to form NAD. Uses ammonia as a nitrogen source. The sequence is that of NH(3)-dependent NAD(+) synthetase from Mycobacteroides abscessus (strain ATCC 19977 / DSM 44196 / CCUG 20993 / CIP 104536 / JCM 13569 / NCTC 13031 / TMC 1543 / L948) (Mycobacterium abscessus).